A 369-amino-acid polypeptide reads, in one-letter code: Quinolinate synthase (369 aa).

Residues histidine 47 and serine 64 each coordinate iminosuccinate. Cysteine 111 is a binding site for [4Fe-4S] cluster. Iminosuccinate contacts are provided by residues tyrosine 142–asparagine 144 and serine 163. Cysteine 231 contributes to the [4Fe-4S] cluster binding site. Iminosuccinate contacts are provided by residues histidine 257–glutamate 259 and threonine 274. Position 321 (cysteine 321) interacts with [4Fe-4S] cluster.

Belongs to the quinolinate synthase family. Type 3 subfamily. Requires [4Fe-4S] cluster as cofactor.

It localises to the cytoplasm. The catalysed reaction is iminosuccinate + dihydroxyacetone phosphate = quinolinate + phosphate + 2 H2O + H(+). It participates in cofactor biosynthesis; NAD(+) biosynthesis; quinolinate from iminoaspartate: step 1/1. Catalyzes the condensation of iminoaspartate with dihydroxyacetone phosphate to form quinolinate. The protein is Quinolinate synthase of Bacillus licheniformis (strain ATCC 14580 / DSM 13 / JCM 2505 / CCUG 7422 / NBRC 12200 / NCIMB 9375 / NCTC 10341 / NRRL NRS-1264 / Gibson 46).